Reading from the N-terminus, the 501-residue chain is Ammonium transporter 2 member 2 (501 aa).

Helical transmembrane passes span 35–55 (VAAT…YGSI), 64–84 (SAFM…LVGF), 140–160 (LVLF…GSLL), 174–194 (LWLL…GFLY), 203–223 (GGYV…YWVG), 238–258 (ILLM…FNGG), 274–294 (TNVS…IFFG), 298–318 (VIGA…GAGL), 322–342 (WSAM…MMIL), 356–376 (LAVF…TGLL), and 412–432 (FVTV…GLFI).

It belongs to the ammonia transporter channel (TC 1.A.11.2) family.

The protein localises to the membrane. Involved in ammonium transport. The chain is Ammonium transporter 2 member 2 (AMT2-2) from Oryza sativa subsp. japonica (Rice).